A 798-amino-acid chain; its full sequence is Cold shock domain-containing protein E1 (798 aa).

Positions Glu-26–Leu-87 constitute a CSD 1 domain. An N6-acetyllysine modification is found at Lys-81. Lys-91 is covalently cross-linked (Glycyl lysine isopeptide (Lys-Gly) (interchain with G-Cter in SUMO2)). Ser-123 carries the post-translational modification Phosphoserine. The CSD 2; truncated domain maps to Val-136 to Leu-179. Positions Tyr-186 to Val-245 constitute a CSD 3 domain. A Phosphoserine modification is found at Ser-276. Positions Leu-297 to Leu-337 constitute a CSD 4; truncated domain. CSD domains are found at residues Glu-349–Ile-410 and Asn-447–Val-507. Ser-514 carries the post-translational modification Phosphoserine. The CSD 7 domain occupies Leu-519 to Val-579. Ser-584 is modified (phosphoserine). CSD domains lie at Pro-610–Ile-670 and Arg-674–Val-735. The region spanning Pro-748 to Arg-789 is the SUZ-C domain. Thr-761 carries the phosphothreonine modification.

Belongs to the UNR family. Component of a multi subunit autoregulatory ribonucleoprotein complex (ARC), at least composed of IGF2BP1, PABPC1 and CSDE1. Interacts with STRAP. Part of a complex associated with the FOS mCRD domain and consisting of PABPC1, PAIP1, HNRPD and SYNCRIP. The interaction with PABPC1 is direct and RNA-independent. Interacts with EIF4ENIF1/4E-T.

It localises to the cytoplasm. The protein localises to the stress granule. The protein resides in the P-body. In terms of biological role, RNA-binding protein involved in translationally coupled mRNA turnover. Implicated with other RNA-binding proteins in the cytoplasmic deadenylation/translational and decay interplay of the FOS mRNA mediated by the major coding-region determinant of instability (mCRD) domain. Required for efficient formation of stress granules. The polypeptide is Cold shock domain-containing protein E1 (Rattus norvegicus (Rat)).